The following is a 450-amino-acid chain: CD209 antigen (450 aa).

Topologically, residues methionine 1–cysteine 37 are cytoplasmic. 3 short sequence motifs (endocytosis signal) span residues leucine 14–leucine 15, glutamate 16–glutamate 18, and tyrosine 31–leucine 34. Residues leucine 38–isoleucine 58 form a helical; Signal-anchor for type II membrane protein membrane-spanning segment. Residues glutamine 59 to valine 450 are Extracellular-facing. Asparagine 80 carries an N-linked (GlcNAc...) asparagine glycan. 9 tandem repeats follow at residues lysine 96 to serine 118, lysine 119 to serine 141, lysine 142 to serine 164, lysine 165 to serine 187, lysine 188 to serine 210, lysine 211 to serine 233, lysine 234 to serine 256, lysine 257 to serine 279, and lysine 280 to proline 303. The interval lysine 96–proline 303 is 9 X approximate tandem repeats. 3 disulfides stabilise this stretch: cysteine 302/cysteine 313, cysteine 330/cysteine 423, and cysteine 402/cysteine 415. Residues phenylalanine 309–lysine 424 form the C-type lectin domain. Ca(2+)-binding residues include glutamate 393, asparagine 395, valine 397, glutamate 400, asparagine 411, and aspartate 412.

In terms of assembly, homotetramer. Interacts with C1QBP; the interaction is indicative for a C1q:C1QBP:CD209 signaling complex. Interacts with ICAM2 and ICAM3 by binding to mannose-like carbohydrates. Interacts (via C-type lectin domain) with CEACAM1 (via Lewis X moieties); this interaction is regulated by the glycosylation pattern of CEACAM1 on cell types and regulates contact between dendritic cells and neutrophils.

It is found in the membrane. Functionally, pathogen-recognition receptor expressed on the surface of immature dendritic cells (DCs) and involved in initiation of primary immune response. Thought to mediate the endocytosis of pathogens which are subsequently degraded in lysosomal compartments. The receptor returns to the cell membrane surface and the pathogen-derived antigens are presented to resting T-cells via MHC class II proteins to initiate the adaptive immune response. Probably recognizes in a calcium-dependent manner high mannose N-linked oligosaccharides in a variety of pathogen antigens. In terms of biological role, on DCs it is a high affinity receptor for ICAM2 and ICAM3 by binding to mannose-like carbohydrates. May act as a DC rolling receptor that mediates transendothelial migration of DC presursors from blood to tissues by binding endothelial ICAM2. Seems to regulate DC-induced T-cell proliferation by binding to ICAM3 on T-cells in the immunological synapse formed between DC and T-cells. The polypeptide is CD209 antigen (CD209) (Hylobates lar (Lar gibbon)).